The sequence spans 365 residues: tRNA N6-adenosine threonylcarbamoyltransferase (365 aa).

Residues histidine 119 and histidine 123 each contribute to the Fe cation site. Substrate contacts are provided by residues 141-145 (LVSGG), aspartate 174, glycine 187, and asparagine 289. Aspartate 317 provides a ligand contact to Fe cation. The segment at 342 to 365 (ARPRWPLDSKSPAMLGSGKKGAKA) is disordered.

It belongs to the KAE1 / TsaD family. It depends on Fe(2+) as a cofactor.

Its subcellular location is the cytoplasm. The catalysed reaction is L-threonylcarbamoyladenylate + adenosine(37) in tRNA = N(6)-L-threonylcarbamoyladenosine(37) in tRNA + AMP + H(+). Its function is as follows. Required for the formation of a threonylcarbamoyl group on adenosine at position 37 (t(6)A37) in tRNAs that read codons beginning with adenine. Is involved in the transfer of the threonylcarbamoyl moiety of threonylcarbamoyl-AMP (TC-AMP) to the N6 group of A37, together with TsaE and TsaB. TsaD likely plays a direct catalytic role in this reaction. This chain is tRNA N6-adenosine threonylcarbamoyltransferase, found in Roseobacter denitrificans (strain ATCC 33942 / OCh 114) (Erythrobacter sp. (strain OCh 114)).